Here is a 318-residue protein sequence, read N- to C-terminus: Protein W (318 aa).

Disordered regions lie at residues 1–23 (MDQD…GGRE) and 38–318 (SEPT…KKGA). The segment covering 7 to 20 (ILKEDSEVEREAPG) has biased composition (basic and acidic residues). Residues 50–59 (LHNTINTPQG) show a composition bias toward polar residues. Phosphoserine; by host is present on Ser-68. The span at 83-101 (RSGEESRVSGRTSKPEAEA) shows a compositional bias: basic and acidic residues. Ser-125 is modified (phosphoserine; by host). Residues 150–168 (GIEDENREMAAHPDKRGED) are compositionally biased toward basic and acidic residues. The segment covering 191 to 206 (ASNNGRSMEPGSSHSA) has biased composition (polar residues). Residues Ser-192, Ser-249, Ser-257, and Ser-260 each carry the phosphoserine; by host modification.

This Sendai virus (strain Fushimi) (SeV) protein is Protein W (P/V/C).